Reading from the N-terminus, the 183-residue chain is MRAACLFLLFMPGLLAQGQYDLDPLPPFPDHVQYNHYGDQIDNADYYDYQEVSPRTPEEQFQSQQQVQQEVIPAPTPEPAAAGDLETEPTEPGPLDCREEQYPCTRLYSIHKPCKQCLNEVCFYSLRRVYVVNKEICVRTVCAHEELLRADLCRDKFSKCGVMAVSGLCQSVAASCARSCGGC.

The or 18 signal peptide spans 1–16; sequence MRAACLFLLFMPGLLA. Residue Q17 is modified to Pyrrolidone carboxylic acid. Y46, Y47, and Y49 each carry sulfotyrosine. Residues 52–92 form a disordered region; that stretch reads VSPRTPEEQFQSQQQVQQEVIPAPTPEPAAAGDLETEPTEP. Over residues 59 to 70 the composition is skewed to low complexity; the sequence is EQFQSQQQVQQE. In terms of domain architecture, ShKT spans 153–183; that stretch reads CRDKFSKCGVMAVSGLCQSVAASCARSCGGC. 3 cysteine pairs are disulfide-bonded: C153–C183, C160–C176, and C169–C180.

This sequence belongs to the MFAP family. As to quaternary structure, forms a ternary complex with BGN and ELN. Interacts with FBN1 (via N-terminal domain) and FBN2. Post-translationally, forms intermolecular disulfide bonds either with other MAGP-1 molecules or with other components of the microfibrils. May form transglutaminase cross-links. O-glycosylated.

The protein localises to the secreted. It is found in the extracellular space. The protein resides in the extracellular matrix. Component of the elastin-associated microfibrils. The protein is Microfibrillar-associated protein 2 (Mfap2) of Mus musculus (Mouse).